Here is a 259-residue protein sequence, read N- to C-terminus: Virulence plasmid ParA family protein pGP5-D (259 aa).

ATP is bound at residue 9 to 16; the sequence is FKGGTGKT.

The protein belongs to the ParA family.

This Chlamydia psittaci (Chlamydophila psittaci) protein is Virulence plasmid ParA family protein pGP5-D.